The chain runs to 514 residues: Lysine--tRNA ligase (514 aa).

Mg(2+) is bound by residues glutamate 422 and glutamate 429.

The protein belongs to the class-II aminoacyl-tRNA synthetase family. Homodimer. Mg(2+) is required as a cofactor.

The protein resides in the cytoplasm. The enzyme catalyses tRNA(Lys) + L-lysine + ATP = L-lysyl-tRNA(Lys) + AMP + diphosphate. The polypeptide is Lysine--tRNA ligase (Psychrobacter arcticus (strain DSM 17307 / VKM B-2377 / 273-4)).